We begin with the raw amino-acid sequence, 218 residues long: Small ribosomal subunit protein uS3c (218 aa).

One can recognise a KH type-2 domain in the interval 47 to 118; it reads VQNNIRISSG…KLNIAITRIS (72 aa).

It belongs to the universal ribosomal protein uS3 family. In terms of assembly, part of the 30S ribosomal subunit.

Its subcellular location is the plastid. The protein localises to the chloroplast. This Draba nemorosa (Woodland whitlowgrass) protein is Small ribosomal subunit protein uS3c (rps3).